A 212-amino-acid polypeptide reads, in one-letter code: tRNA (guanine-N(7)-)-methyltransferase (212 aa).

Glutamate 44, glutamate 69, aspartate 96, and aspartate 118 together coordinate S-adenosyl-L-methionine. The active site involves aspartate 118. Lysine 122 is a binding site for substrate. An interaction with RNA region spans residues 124–129 (RHEKRR). Residues aspartate 154 and 192–195 (TEYE) contribute to the substrate site.

The protein belongs to the class I-like SAM-binding methyltransferase superfamily. TrmB family.

The enzyme catalyses guanosine(46) in tRNA + S-adenosyl-L-methionine = N(7)-methylguanosine(46) in tRNA + S-adenosyl-L-homocysteine. Its pathway is tRNA modification; N(7)-methylguanine-tRNA biosynthesis. Catalyzes the formation of N(7)-methylguanine at position 46 (m7G46) in tRNA. The protein is tRNA (guanine-N(7)-)-methyltransferase of Pediococcus pentosaceus (strain ATCC 25745 / CCUG 21536 / LMG 10740 / 183-1w).